Consider the following 117-residue polypeptide: Large ribosomal subunit protein uL18 (117 aa).

This sequence belongs to the universal ribosomal protein uL18 family. As to quaternary structure, part of the 50S ribosomal subunit; part of the 5S rRNA/L5/L18/L25 subcomplex. Contacts the 5S and 23S rRNAs.

Functionally, this is one of the proteins that bind and probably mediate the attachment of the 5S RNA into the large ribosomal subunit, where it forms part of the central protuberance. The polypeptide is Large ribosomal subunit protein uL18 (Thioalkalivibrio sulfidiphilus (strain HL-EbGR7)).